A 142-amino-acid chain; its full sequence is MKTFVAKPETVKRDWYVVDAEGKTLGRIATEIALRLRGKHKVEYTPHVDTGDYIIVINAEKVTVTGNKFKNKVYYSHSGFPGGLKSTTFDKLQAAKPEMIIEKAVKGMLPRGPLGRAMYRKLKVYTGTEHNHAAQQPQVLDI.

Belongs to the universal ribosomal protein uL13 family. Part of the 50S ribosomal subunit.

Its function is as follows. This protein is one of the early assembly proteins of the 50S ribosomal subunit, although it is not seen to bind rRNA by itself. It is important during the early stages of 50S assembly. The protein is Large ribosomal subunit protein uL13 of Pseudoalteromonas translucida (strain TAC 125).